Reading from the N-terminus, the 305-residue chain is Type II secretion system protein C (305 aa).

Residues 1-29 (MEFKQLPPLAAWPRLLSQNTLRWQKPISE) are Cytoplasmic-facing. A helical membrane pass occupies residues 30-50 (GLTLLLLVASAWTLGKMVWVV). Residues 51-305 (SAEQTPVPTW…GQQHDVYIQF (255 aa)) lie on the Periplasmic side of the membrane.

It belongs to the GSP C family.

It is found in the cell inner membrane. Involved in a type II secretion system (T2SS, formerly general secretion pathway, GSP) for the export of proteins. Required for secretion of cholera toxin through the outer membrane. The chain is Type II secretion system protein C (epsC) from Vibrio cholerae serotype O1 (strain ATCC 39315 / El Tor Inaba N16961).